The following is a 386-amino-acid chain: MNEPAKHRLGCTRTPEPDIRLRKGHQLDDTRGSNNDNYQGDLEPSLETPVCSSYYENSPEEPECHDDNSQEDEGFMGMSPLLQAHHAMERMEEFVCKVWEGRWRVIPHDVLPDWLKDNDFLLHGHRPPMPSFRACFKSIFRIHTETGNIWTHLLGCVFFLCLGIFYMFRPNISFVAPLQEKVVFGLFFLGAILCLSFSWLFHTVYCHSEGVSRLFSKLDYSGIALLIMGSFVPWLYYSFYCNPQPCFIYLIVICVLGIAAIIVSQWDMFATPQYRGVRAGVFVGLGLSGIIPTLHYVISEGFLKAATIGQIGWLMLMASLYITGAALYAARIPERFFPGKCDIWFHSHQLFHIFVVAGAFVHFHGVSNLQEFRFMIGGGCTEEDAL.

Residues 1–72 (MNEPAKHRLG…ECHDDNSQED (72 aa)) are disordered. At 1–147 (MNEPAKHRLG…SIFRIHTETG (147 aa)) the chain is on the cytoplasmic side. Residues 15 to 31 (PEPDIRLRKGHQLDDTR) are compositionally biased toward basic and acidic residues. The span at 58-72 (SPEEPECHDDNSQED) shows a compositional bias: acidic residues. The chain crosses the membrane as a helical span at residues 148-168 (NIWTHLLGCVFFLCLGIFYMF). Over 169–181 (RPNISFVAPLQEK) the chain is Extracellular. A helical membrane pass occupies residues 182–202 (VVFGLFFLGAILCLSFSWLFH). A Zn(2+)-binding site is contributed by His202. Over 203–213 (TVYCHSEGVSR) the chain is Cytoplasmic. Residues 214-234 (LFSKLDYSGIALLIMGSFVPW) form a helical membrane-spanning segment. At 235 to 245 (LYYSFYCNPQP) the chain is on the extracellular side. Residues 246–266 (CFIYLIVICVLGIAAIIVSQW) traverse the membrane as a helical segment. At 267 to 273 (DMFATPQ) the chain is on the cytoplasmic side. Residues 274-294 (YRGVRAGVFVGLGLSGIIPTL) form a helical membrane-spanning segment. The Extracellular segment spans residues 295–309 (HYVISEGFLKAATIG). The chain crosses the membrane as a helical span at residues 310-330 (QIGWLMLMASLYITGAALYAA). At 331-348 (RIPERFFPGKCDIWFHSH) the chain is on the cytoplasmic side. Zn(2+) contacts are provided by His348 and His352. A helical membrane pass occupies residues 349–369 (QLFHIFVVAGAFVHFHGVSNL). Residues 370–386 (QEFRFMIGGGCTEEDAL) are Extracellular-facing.

Belongs to the ADIPOR family. As to quaternary structure, may form homooligomers and heterooligomers with ADIPOR1. Interacts with APPL2 (via BAR domain); ADIPOQ dissociates this interaction. As to expression, detected in liver and quadriceps muscle (at protein level). Highly expressed in liver. Highly expressed in white adipose tissue, and at intermediate levels in brown adipose tissue. Expressed at intermediate level in heart, kidney, lung and skeletal muscle. Weakly expressed in brain, spleen and testis.

Its subcellular location is the cell membrane. Its function is as follows. Receptor for ADIPOQ, an essential hormone secreted by adipocytes that regulates glucose and lipid metabolism. Required for normal body fat and glucose homeostasis. ADIPOQ-binding activates a signaling cascade that leads to increased PPARA activity, and ultimately to increased fatty acid oxidation and glucose uptake. Has intermediate affinity for globular and full-length adiponectin. Required for normal revascularization after chronic ischemia caused by severing of blood vessels. In Mus musculus (Mouse), this protein is Adiponectin receptor protein 2.